The following is a 407-amino-acid chain: 4-hydroxy-3-methylbut-2-en-1-yl diphosphate synthase (flavodoxin) (407 aa).

C296, C299, C342, and E349 together coordinate [4Fe-4S] cluster.

It belongs to the IspG family. It depends on [4Fe-4S] cluster as a cofactor.

It carries out the reaction (2E)-4-hydroxy-3-methylbut-2-enyl diphosphate + oxidized [flavodoxin] + H2O + 2 H(+) = 2-C-methyl-D-erythritol 2,4-cyclic diphosphate + reduced [flavodoxin]. Its pathway is isoprenoid biosynthesis; isopentenyl diphosphate biosynthesis via DXP pathway; isopentenyl diphosphate from 1-deoxy-D-xylulose 5-phosphate: step 5/6. Its function is as follows. Converts 2C-methyl-D-erythritol 2,4-cyclodiphosphate (ME-2,4cPP) into 1-hydroxy-2-methyl-2-(E)-butenyl 4-diphosphate. This is 4-hydroxy-3-methylbut-2-en-1-yl diphosphate synthase (flavodoxin) from Methylococcus capsulatus (strain ATCC 33009 / NCIMB 11132 / Bath).